Here is a 295-residue protein sequence, read N- to C-terminus: Protein PAR32 (295 aa).

At Ala2 the chain carries N-acetylalanine. Ser36, Ser39, Ser47, Ser123, Ser138, Ser141, and Ser147 each carry phosphoserine. The segment covering 134-153 (SATRSHQSLHATTSSPNNNA) has biased composition (polar residues). 2 disordered regions span residues 134-156 (SATRSHQSLHATTSSPNNNAPIV) and 217-295 (TSKK…TMFN). Basic residues predominate over residues 217–227 (TSKKPKNKLKG). Phosphoserine is present on Ser246. Residues 246–256 (SPKSSRNTINH) are compositionally biased toward polar residues. The span at 265–274 (KFNLKDDNGK) shows a compositional bias: basic and acidic residues. The segment covering 275–284 (EKKKKKKKKS) has biased composition (basic residues). Positions 285 to 295 (GFFSSLKTMFN) are enriched in low complexity.

Post-translationally, hyperphosphorylated after treatment with rapamycin in a TAP42-dependent manner.

The protein resides in the cytoplasm. Its function is as follows. Involved in resistance to cisplatin. In Saccharomyces cerevisiae (strain ATCC 204508 / S288c) (Baker's yeast), this protein is Protein PAR32 (PAR32).